A 412-amino-acid chain; its full sequence is Probable beta-1,4-xylosyltransferase IRX10 (412 aa).

Residues 1–21 (MKIHSCLSAILLFLFFSASSA) form a helical; Signal-anchor for type II membrane protein membrane-spanning segment. The Lumenal portion of the chain corresponds to 22–412 (KQNVRTERIS…AGPVADLKPW (391 aa)). Residues N139 and N400 are each glycosylated (N-linked (GlcNAc...) asparagine).

It belongs to the glycosyltransferase 47 family. As to expression, limited to xylem cells. Expressed in the root tip, xylem cells of roots, and in the vasculature of roots, cotyledons and leaves.

The protein localises to the golgi apparatus membrane. In terms of biological role, involved in the synthesis of the hemicellulose glucuronoxylan, a major component of secondary cell walls. Probably involved in the elongation of glucuronoxylan xylosyl backbone, especially in the formation of GlcUA side chain of xylans. This Arabidopsis thaliana (Mouse-ear cress) protein is Probable beta-1,4-xylosyltransferase IRX10 (IRX10).